A 245-amino-acid chain; its full sequence is tRNA (guanine-N(1)-)-methyltransferase (245 aa).

S-adenosyl-L-methionine contacts are provided by residues Gly-111 and 131 to 136 (MGDYVL).

This sequence belongs to the RNA methyltransferase TrmD family. Homodimer.

It is found in the cytoplasm. The enzyme catalyses guanosine(37) in tRNA + S-adenosyl-L-methionine = N(1)-methylguanosine(37) in tRNA + S-adenosyl-L-homocysteine + H(+). Its function is as follows. Specifically methylates guanosine-37 in various tRNAs. The polypeptide is tRNA (guanine-N(1)-)-methyltransferase (Staphylococcus aureus (strain Mu3 / ATCC 700698)).